A 544-amino-acid polypeptide reads, in one-letter code: Probable acyl-activating enzyme 8 (544 aa).

The protein belongs to the ATP-dependent AMP-binding enzyme family. In terms of tissue distribution, expressed at low levels in roots, leaves, stems, flowers and developing seeds.

In terms of biological role, may act as an acid--thiol ligase that activates carboxylic acids by forming acyl-CoAs. In Arabidopsis thaliana (Mouse-ear cress), this protein is Probable acyl-activating enzyme 8 (AAE8).